The following is a 68-amino-acid chain: Metallothionein-3 (68 aa).

M1 bears the N-acetylmethionine mark. The beta stretch occupies residues M1–C30. Residues C6, C8, C14, C16, C20, C22, C25, C27, and C30 each contribute to the a divalent metal cation site. An alpha region spans residues K31–E68. Position 33 is a phosphoserine (S33). A divalent metal cation contacts are provided by C34, C35, C37, C38, C42, C45, C49, C51, C64, C66, and C67.

The protein belongs to the metallothionein superfamily. Type 1 family.

Binds heavy metals. Contains five zinc and one copper atoms per polypeptide chain and only a negligible amount of cadmium. The protein is Metallothionein-3 (MT3) of Macaca fascicularis (Crab-eating macaque).